A 33-amino-acid chain; its full sequence is Toxin Bcg III 25.52 (33 aa).

An intrachain disulfide couples cysteine 6 to cysteine 28.

The protein localises to the secreted. It localises to the nematocyst. The sequence is that of Toxin Bcg III 25.52 from Bunodosoma cangicum (Sea anemone).